A 338-amino-acid chain; its full sequence is tRNA-specific 2-thiouridylase MnmA (338 aa).

ATP is bound by residues 6-13 and M32; that span reads AMSGGVDS. C92 functions as the Nucleophile in the catalytic mechanism. A disulfide bridge links C92 with C186. ATP is bound at residue G116. Residues 134–136 are interaction with tRNA; that stretch reads KDQ. C186 (cysteine persulfide intermediate) is an active-site residue. The interval 288 to 289 is interaction with tRNA; that stretch reads RY.

It belongs to the MnmA/TRMU family.

It localises to the cytoplasm. It catalyses the reaction S-sulfanyl-L-cysteinyl-[protein] + uridine(34) in tRNA + AH2 + ATP = 2-thiouridine(34) in tRNA + L-cysteinyl-[protein] + A + AMP + diphosphate + H(+). In terms of biological role, catalyzes the 2-thiolation of uridine at the wobble position (U34) of tRNA, leading to the formation of s(2)U34. In Campylobacter jejuni subsp. jejuni serotype O:2 (strain ATCC 700819 / NCTC 11168), this protein is tRNA-specific 2-thiouridylase MnmA.